Here is a 140-residue protein sequence, read N- to C-terminus: Neuropeptide CCHamide-2 (140 aa).

An N-terminal signal peptide occupies residues methionine 1–alanine 22. A disulfide bridge links cysteine 26 with cysteine 33. Position 37 is a histidine amide (histidine 37). The propeptide occupies serine 41–leucine 140.

In terms of tissue distribution, expressed in corpora cardiaca (CC), corpora allata (CA), antennal lobe (AL) and gnathal ganglion (GNG) (at protein level). Expression detected in few animals (at protein level).

The protein localises to the secreted. Its function is as follows. Ligand for the CCHamide-2 receptor CCHa2-R. In Agrotis ipsilon (Black cutworm moth), this protein is Neuropeptide CCHamide-2.